The following is a 405-amino-acid chain: Acetate kinase (405 aa).

Position 7 (Asn-7) interacts with Mg(2+). Lys-14 contributes to the ATP binding site. Arg-99 provides a ligand contact to substrate. The Proton donor/acceptor role is filled by Asp-156. 215–219 (HLGNG) serves as a coordination point for ATP. A Mg(2+)-binding site is contributed by Glu-391.

This sequence belongs to the acetokinase family. In terms of assembly, homodimer. Mg(2+) serves as cofactor. Mn(2+) is required as a cofactor.

It localises to the cytoplasm. The catalysed reaction is acetate + ATP = acetyl phosphate + ADP. The protein operates within metabolic intermediate biosynthesis; acetyl-CoA biosynthesis; acetyl-CoA from acetate: step 1/2. Its function is as follows. Catalyzes the formation of acetyl phosphate from acetate and ATP. Can also catalyze the reverse reaction. The protein is Acetate kinase of Trichormus variabilis (strain ATCC 29413 / PCC 7937) (Anabaena variabilis).